Reading from the N-terminus, the 527-residue chain is Peptide chain release factor 3 (527 aa).

The tr-type G domain occupies 9-277 (AKRRTFAIIS…AVVDWAPRPL (269 aa)). GTP-binding positions include 18–25 (SHPDAGKT), 86–90 (DTPGH), and 140–143 (NKLD).

It belongs to the TRAFAC class translation factor GTPase superfamily. Classic translation factor GTPase family. PrfC subfamily.

Its subcellular location is the cytoplasm. In terms of biological role, increases the formation of ribosomal termination complexes and stimulates activities of RF-1 and RF-2. It binds guanine nucleotides and has strong preference for UGA stop codons. It may interact directly with the ribosome. The stimulation of RF-1 and RF-2 is significantly reduced by GTP and GDP, but not by GMP. This chain is Peptide chain release factor 3, found in Pseudomonas fluorescens (strain Pf0-1).